The primary structure comprises 276 residues: Large ribosomal subunit protein uL2 (276 aa).

2 disordered regions span residues 1 to 20 (MGIK…TTND) and 219 to 276 (TVRG…RRKK). Polar residues predominate over residues 7–20 (NPTTNGRRNMTTND).

The protein belongs to the universal ribosomal protein uL2 family. Part of the 50S ribosomal subunit. Forms a bridge to the 30S subunit in the 70S ribosome.

One of the primary rRNA binding proteins. Required for association of the 30S and 50S subunits to form the 70S ribosome, for tRNA binding and peptide bond formation. It has been suggested to have peptidyltransferase activity; this is somewhat controversial. Makes several contacts with the 16S rRNA in the 70S ribosome. This is Large ribosomal subunit protein uL2 from Bacillus anthracis (strain A0248).